The primary structure comprises 171 residues: 3-hydroxydecanoyl-[acyl-carrier-protein] dehydratase (171 aa).

Residue His-70 is part of the active site.

The protein belongs to the thioester dehydratase family. FabA subfamily. Homodimer.

It is found in the cytoplasm. The catalysed reaction is a (3R)-hydroxyacyl-[ACP] = a (2E)-enoyl-[ACP] + H2O. It carries out the reaction (3R)-hydroxydecanoyl-[ACP] = (2E)-decenoyl-[ACP] + H2O. The enzyme catalyses (2E)-decenoyl-[ACP] = (3Z)-decenoyl-[ACP]. Its pathway is lipid metabolism; fatty acid biosynthesis. Functionally, necessary for the introduction of cis unsaturation into fatty acids. Catalyzes the dehydration of (3R)-3-hydroxydecanoyl-ACP to E-(2)-decenoyl-ACP and then its isomerization to Z-(3)-decenoyl-ACP. Can catalyze the dehydratase reaction for beta-hydroxyacyl-ACPs with saturated chain lengths up to 16:0, being most active on intermediate chain length. This is 3-hydroxydecanoyl-[acyl-carrier-protein] dehydratase from Shewanella sp. (strain ANA-3).